The sequence spans 393 residues: Formate-dependent phosphoribosylglycinamide formyltransferase (393 aa).

N(1)-(5-phospho-beta-D-ribosyl)glycinamide contacts are provided by residues 22–23 (EL) and E82. ATP is bound by residues R114, K155, 160–165 (SSGKGQ), 195–198 (ESFV), and E203. The ATP-grasp domain maps to 119–308 (RLAAEEVGLK…EFALHVRAIL (190 aa)). The Mg(2+) site is built by E267 and E279. Residues D286, K356, and 363–364 (RR) each bind N(1)-(5-phospho-beta-D-ribosyl)glycinamide.

It belongs to the PurK/PurT family. As to quaternary structure, homodimer.

The catalysed reaction is N(1)-(5-phospho-beta-D-ribosyl)glycinamide + formate + ATP = N(2)-formyl-N(1)-(5-phospho-beta-D-ribosyl)glycinamide + ADP + phosphate + H(+). It functions in the pathway purine metabolism; IMP biosynthesis via de novo pathway; N(2)-formyl-N(1)-(5-phospho-D-ribosyl)glycinamide from N(1)-(5-phospho-D-ribosyl)glycinamide (formate route): step 1/1. Involved in the de novo purine biosynthesis. Catalyzes the transfer of formate to 5-phospho-ribosyl-glycinamide (GAR), producing 5-phospho-ribosyl-N-formylglycinamide (FGAR). Formate is provided by PurU via hydrolysis of 10-formyl-tetrahydrofolate. This Maridesulfovibrio salexigens (strain ATCC 14822 / DSM 2638 / NCIMB 8403 / VKM B-1763) (Desulfovibrio salexigens) protein is Formate-dependent phosphoribosylglycinamide formyltransferase.